A 175-amino-acid polypeptide reads, in one-letter code: ATP synthase subunit b 2 (175 aa).

Residues 20–40 (LIFWTTITFVLVLIILKKIAW) form a helical membrane-spanning segment.

This sequence belongs to the ATPase B chain family. As to quaternary structure, F-type ATPases have 2 components, F(1) - the catalytic core - and F(0) - the membrane proton channel. F(1) has five subunits: alpha(3), beta(3), gamma(1), delta(1), epsilon(1). F(0) has four main subunits: a(1), b(2) and c(10-14). The alpha and beta chains form an alternating ring which encloses part of the gamma chain. F(1) is attached to F(0) by a central stalk formed by the gamma and epsilon chains, while a peripheral stalk is formed by the delta and b chains.

The protein localises to the cell inner membrane. In terms of biological role, f(1)F(0) ATP synthase produces ATP from ADP in the presence of a proton or sodium gradient. F-type ATPases consist of two structural domains, F(1) containing the extramembraneous catalytic core and F(0) containing the membrane proton channel, linked together by a central stalk and a peripheral stalk. During catalysis, ATP synthesis in the catalytic domain of F(1) is coupled via a rotary mechanism of the central stalk subunits to proton translocation. Its function is as follows. Component of the F(0) channel, it forms part of the peripheral stalk, linking F(1) to F(0). This chain is ATP synthase subunit b 2, found in Chlorobium luteolum (strain DSM 273 / BCRC 81028 / 2530) (Pelodictyon luteolum).